The sequence spans 183 residues: Apo-citrate lyase phosphoribosyl-dephospho-CoA transferase (183 aa).

The protein belongs to the CitX family.

It carries out the reaction apo-[citrate lyase ACP] + 2'-(5''-triphospho-alpha-D-ribosyl)-3'-dephospho-CoA = holo-[citrate lyase ACP] + diphosphate. Its function is as follows. Transfers 2-(5''-triphosphoribosyl)-3'-dephosphocoenzyme-A on a serine residue to the apo-acyl carrier protein (gamma chain) of the citrate lyase to yield holo-acyl carrier protein. The chain is Apo-citrate lyase phosphoribosyl-dephospho-CoA transferase from Escherichia coli O9:H4 (strain HS).